The primary structure comprises 658 residues: Katanin p80 WD40 repeat-containing subunit B1 (658 aa).

Positions 1 to 284 (MATPVVTKTA…VADLAICNDQ (284 aa)) are interaction with dynein. The segment at 1–300 (MATPVVTKTA…SQSNVSSYVV (300 aa)) is interaction with centrosomes. WD repeat units lie at residues 18-58 (AHAS…CIMS), 61-100 (GHTS…ILRT), 103-142 (GHKA…CVFR), 145-184 (GHSQ…MMSE), 187-226 (GHTG…VVSC), and 229-269 (GEPG…DVVL). Residues 285–437 (LIGVAFSQSN…LPQLPVPNLE (153 aa)) form an interaction with PAFAH1B1 region. Positions 311–329 (VTQDPVQANQPLTQQTPNP) are enriched in polar residues. Disordered regions lie at residues 311-419 (VTQD…EVSK) and 434-458 (PNLE…PDII). Residues 352-374 (HNSESERRSPSSEDDRDERESRA) are compositionally biased toward basic and acidic residues. T395 carries the phosphothreonine modification. The interaction with KATNA1 and NDEL1 stretch occupies residues 436 to 658 (LEVPARPSVM…ELHLLMASLD (223 aa)).

It belongs to the WD repeat KATNB1 family. As to quaternary structure, interacts with KATNA1. This interaction enhances the microtubule binding and severing activity of KATNA1 and also targets this activity to the centrosome. This interaction is weakly competed by KATNBL1 which has a lower affinity for it. Interacts with ASPM; the katanin complex formation KATNA1:KATNB1 is required for the association of ASPM. Interacts with dynein, microtubules, NDEL1 and PAFAH1B1. Interacts with KATNAL1; this interaction is weakly competed by KATNBL1 which has a lower affinity for it. Interacts with CAMSAP2 and CAMSAP3; leading to regulate the length of CAMSAP-decorated microtubule stretches.

It is found in the cytoplasm. The protein localises to the cytoskeleton. It localises to the microtubule organizing center. Its subcellular location is the centrosome. The protein resides in the spindle pole. It is found in the spindle. In terms of biological role, participates in a complex which severs microtubules in an ATP-dependent manner. May act to target the enzymatic subunit of this complex to sites of action such as the centrosome. Microtubule severing may promote rapid reorganization of cellular microtubule arrays and the release of microtubules from the centrosome following nucleation. Microtubule release from the mitotic spindle poles may allow depolymerization of the microtubule end proximal to the spindle pole, leading to poleward microtubule flux and poleward motion of chromosome. The function in regulating microtubule dynamics at spindle poles seems to depend on the association of the katanin KATNA1:KATNB1 complex with ASPM which recruits it to microtubules. Reversely KATNA1:KATNB1 can enhance ASPM blocking activity on microtubule minus-end growth. Microtubule release within the cell body of neurons may be required for their transport into neuronal processes by microtubule-dependent motor proteins. This transport is required for axonal growth. This is Katanin p80 WD40 repeat-containing subunit B1 (Katnb1) from Mus musculus (Mouse).